A 61-amino-acid polypeptide reads, in one-letter code: Large ribosomal subunit protein uL30 (61 aa).

The protein belongs to the universal ribosomal protein uL30 family. As to quaternary structure, part of the 50S ribosomal subunit.

The sequence is that of Large ribosomal subunit protein uL30 from Corynebacterium glutamicum (strain ATCC 13032 / DSM 20300 / JCM 1318 / BCRC 11384 / CCUG 27702 / LMG 3730 / NBRC 12168 / NCIMB 10025 / NRRL B-2784 / 534).